The primary structure comprises 22 residues: Phospholipase A2 (22 aa).

It belongs to the phospholipase A2 family. Requires Ca(2+) as cofactor.

Its subcellular location is the secreted. It catalyses the reaction a 1,2-diacyl-sn-glycero-3-phosphocholine + H2O = a 1-acyl-sn-glycero-3-phosphocholine + a fatty acid + H(+). In terms of biological role, PA2 catalyzes the calcium-dependent hydrolysis of the 2-acyl groups in 3-sn-phosphoglycerides. The protein is Phospholipase A2 of Struthio camelus (Common ostrich).